The chain runs to 166 residues: NAD(P)H-quinone oxidoreductase subunit I, chloroplastic (166 aa).

4Fe-4S ferredoxin-type domains follow at residues 55–84 (GRIHFEFDKCIACEVCVRVCPIDLPVVDWK) and 95–124 (LNYSIDFGICIFCGNCVEYCPTNCLSMTEE). [4Fe-4S] cluster is bound by residues cysteine 64, cysteine 67, cysteine 70, cysteine 74, cysteine 104, cysteine 107, cysteine 110, and cysteine 114.

Belongs to the complex I 23 kDa subunit family. As to quaternary structure, NDH is composed of at least 16 different subunits, 5 of which are encoded in the nucleus. [4Fe-4S] cluster serves as cofactor.

It localises to the plastid. Its subcellular location is the chloroplast thylakoid membrane. The enzyme catalyses a plastoquinone + NADH + (n+1) H(+)(in) = a plastoquinol + NAD(+) + n H(+)(out). It catalyses the reaction a plastoquinone + NADPH + (n+1) H(+)(in) = a plastoquinol + NADP(+) + n H(+)(out). NDH shuttles electrons from NAD(P)H:plastoquinone, via FMN and iron-sulfur (Fe-S) centers, to quinones in the photosynthetic chain and possibly in a chloroplast respiratory chain. The immediate electron acceptor for the enzyme in this species is believed to be plastoquinone. Couples the redox reaction to proton translocation, and thus conserves the redox energy in a proton gradient. This Hofmeisteria fasciculata (Helogyne fasciculata) protein is NAD(P)H-quinone oxidoreductase subunit I, chloroplastic.